A 347-amino-acid polypeptide reads, in one-letter code: Lipopolysaccharide core heptosyltransferase OpsX (347 aa).

This sequence belongs to the glycosyltransferase 9 family.

It functions in the pathway bacterial outer membrane biogenesis; LPS core biosynthesis. Its function is as follows. Catalyzes heptose transfer to the lipopolysaccharide core. It transfers the first L-glycero-D-manno-heptose to the phosphorylated 3-deoxy-alpha-D-manno-octulosonic acid (Kdo-P) of the inner core. This chain is Lipopolysaccharide core heptosyltransferase OpsX, found in Haemophilus influenzae (strain ATCC 51907 / DSM 11121 / KW20 / Rd).